The chain runs to 738 residues: uncharacterized protein (738 aa).

Composition is skewed to polar residues over residues 1–34 (MSSS…QVSS), 140–169 (TSSD…QSPP), and 177–197 (KPFS…STKD). 2 disordered regions span residues 1-51 (MSSS…AASI) and 140-197 (TSSD…STKD). Residues 363 to 434 (SRLFLGHLNT…QKLHLEISKI (72 aa)) form the RRM domain. The segment at 466 to 487 (YPTSSRKRTRSPLMSKGKSYDR) is disordered.

This is an uncharacterized protein from Schizosaccharomyces pombe (strain 972 / ATCC 24843) (Fission yeast).